The following is a 360-amino-acid chain: Catabolic L-serine/threonine dehydratase (360 aa).

Ser-2 carries the N-acetylserine modification. Position 37 is an N6-(pyridoxal phosphate)lysine (Lys-37).

Belongs to the serine/threonine dehydratase family. It depends on pyridoxal 5'-phosphate as a cofactor.

The protein localises to the mitochondrion. The enzyme catalyses L-serine = pyruvate + NH4(+). It catalyses the reaction L-threonine = 2-oxobutanoate + NH4(+). This is Catabolic L-serine/threonine dehydratase (CHA1) from Saccharomyces cerevisiae (strain ATCC 204508 / S288c) (Baker's yeast).